A 412-amino-acid polypeptide reads, in one-letter code: FAD-dependent monooxygenase nscC (412 aa).

A signal peptide spans 1–21; that stretch reads MGKQQETILIIGAGIAGLTTS. Glu35 and Ala46 together coordinate FAD. Asn92 carries N-linked (GlcNAc...) asparagine glycosylation. An FAD-binding site is contributed by Arg119. N-linked (GlcNAc...) asparagine glycans are attached at residues Asn170 and Asn231. FAD contacts are provided by Asp326 and Gly339.

It belongs to the paxM FAD-dependent monooxygenase family. Requires FAD as cofactor.

It participates in secondary metabolite biosynthesis. Its function is as follows. FAD-dependent monooxygenase; part of the gene cluster that mediates the biosynthesis of neosartoricin B, a prenylated anthracenone that probably exhibits T-cell antiproliferative activity, suggestive of a physiological role as an immunosuppressive agent. The non-reducing polyketide synthase nscA probably synthesizes and cyclizes the decaketide backbone. The hydrolase nscB then mediates the product release through hydrolysis followed by spontaneous decarboxylation. The prenyltransferase nscD catalyzes the addition of the dimethylallyl group to the aromatic C5. The FAD-dependent monooxygenase nscC is then responsible for the stereospecific hydroxylation at C2. Neosartoricin B can be converted into two additional compounds neosartoricins C and D. Neosartoricin C is a spirocyclic compound that is cyclized through the attack of C3 hydroxyl on C14, followed by dehydration. On the other hand, neosartoricin D is a further cyclized compound in which attack of C2 on C14 in neosartoricin C results in the formation of the acetal-containing dioxabicyclo-octanone ring. Both of these compounds are novel and possibly represent related metabolites of the gene cluster. This Arthroderma benhamiae (strain ATCC MYA-4681 / CBS 112371) (Trichophyton mentagrophytes) protein is FAD-dependent monooxygenase nscC.